Here is a 143-residue protein sequence, read N- to C-terminus: Large ribosomal subunit protein uL11 (143 aa).

Belongs to the universal ribosomal protein uL11 family. As to quaternary structure, part of the ribosomal stalk of the 50S ribosomal subunit. Interacts with L10 and the large rRNA to form the base of the stalk. L10 forms an elongated spine to which L12 dimers bind in a sequential fashion forming a multimeric L10(L12)X complex. Post-translationally, one or more lysine residues are methylated.

In terms of biological role, forms part of the ribosomal stalk which helps the ribosome interact with GTP-bound translation factors. In Psychrobacter cryohalolentis (strain ATCC BAA-1226 / DSM 17306 / VKM B-2378 / K5), this protein is Large ribosomal subunit protein uL11.